The sequence spans 338 residues: D-erythrose-4-phosphate dehydrogenase (338 aa).

11 to 12 is a binding site for NAD(+); the sequence is RI. Substrate is bound by residues 153-155, R199, 212-213, and R235; these read SCT and TK. C154 serves as the catalytic Nucleophile. Residue N317 coordinates NAD(+).

It belongs to the glyceraldehyde-3-phosphate dehydrogenase family. Epd subfamily. As to quaternary structure, homotetramer.

It localises to the cytoplasm. The enzyme catalyses D-erythrose 4-phosphate + NAD(+) + H2O = 4-phospho-D-erythronate + NADH + 2 H(+). It participates in cofactor biosynthesis; pyridoxine 5'-phosphate biosynthesis; pyridoxine 5'-phosphate from D-erythrose 4-phosphate: step 1/5. In terms of biological role, catalyzes the NAD-dependent conversion of D-erythrose 4-phosphate to 4-phosphoerythronate. This is D-erythrose-4-phosphate dehydrogenase from Shewanella baltica (strain OS223).